A 406-amino-acid chain; its full sequence is Testis-specific Y-encoded-like protein 4 (406 aa).

4 disordered regions span residues 1–63 (MNGV…EHCG), 81–121 (GLED…AKPK), 161–189 (EAGA…TRPR), and 387–406 (VRVP…FQSG). Positions 8–20 (NELSLANTTTPSH) are enriched in polar residues. The span at 93-102 (DAPSAPVAAD) shows a compositional bias: low complexity. Positions 167-188 (QEKKGLQKEKKVAGGGKEETRP) are enriched in basic and acidic residues.

This sequence belongs to the nucleosome assembly protein (NAP) family.

This Mus musculus (Mouse) protein is Testis-specific Y-encoded-like protein 4 (Tspyl4).